Here is a 492-residue protein sequence, read N- to C-terminus: Solute carrier family 2, facilitated glucose transporter member 1 (492 aa).

M1 carries the post-translational modification N-acetylmethionine. The Cytoplasmic portion of the chain corresponds to 1-11; sequence MEPSSKKLTGR. The helical transmembrane segment at 12-33 threads the bilayer; it reads LMLAVGGAVLGSLQFGYNTGVI. The Extracellular portion of the chain corresponds to 34 to 66; sequence NAPQKVIEEFYNQTWLHRYGESISPATLTTLWS. N-linked (GlcNAc...) asparagine glycosylation is present at N45. Residues 67 to 87 form a helical membrane-spanning segment; the sequence is LSVAIFSVGGMIGSFSVGLFV. At 88-90 the chain is on the cytoplasmic side; the sequence is NRF. The chain crosses the membrane as a helical span at residues 91–112; it reads GRRNSMLMMNLLAFISAVLMGF. Residues 113-120 lie on the Extracellular side of the membrane; the sequence is SKLGKSFE. A helical transmembrane segment spans residues 121–144; that stretch reads MLILGRFIIGVYCGLTTGFVPMYV. Over 145–155 the chain is Cytoplasmic; sequence GEVSPTALRGA. Residues 156–176 traverse the membrane as a helical segment; it reads LGTLHQLGIVVGILIAQVFGL. Q161 serves as a coordination point for D-glucose. Topologically, residues 177–185 are extracellular; that stretch reads DSIMGNEEL. Residues 186–206 traverse the membrane as a helical segment; the sequence is WPLLLSVIFIPALLQCVLLPF. The Cytoplasmic segment spans residues 207–271; sequence CPESPRFLLI…LFRSAAYRQP (65 aa). S226 bears the Phosphoserine mark. The helical transmembrane segment at 272–293 threads the bilayer; sequence ILIAVVLQLSQQLSGINAVFYY. Residues 282–283 and N288 contribute to the D-glucose site; that span reads QQ. The Extracellular portion of the chain corresponds to 294 to 306; sequence STSIFEKAGVQQP. A helical membrane pass occupies residues 307–328; sequence VYATIGSGIVNTAFTVVSLFVV. N317 is a binding site for D-glucose. At 329–334 the chain is on the cytoplasmic side; the sequence is ERAGRR. The helical transmembrane segment at 335-355 threads the bilayer; that stretch reads TLHLIGLAGMAGCAVLMTIAL. Topologically, residues 356–365 are extracellular; that stretch reads ALLEQLPWMS. The chain crosses the membrane as a helical span at residues 366–388; it reads YLSIVAIFGFVAFFEVGPGPIPW. D-glucose contacts are provided by E380 and W388. At 389–401 the chain is on the cytoplasmic side; sequence FIVAELFSQGPRP. A helical membrane pass occupies residues 402-422; sequence AAIAVAGFSNWTSNFIVGMCF. Over 423–429 the chain is Extracellular; the sequence is QYVEQLC. Residues 430-450 form a helical membrane-spanning segment; sequence GPYVFIIFTVLLVLFFIFTYF. S465 carries the post-translational modification Phosphoserine. Residues 468–492 form a disordered region; that stretch reads RQGGASQSDKTPEELFHPLGADSQV. Phosphothreonine is present on T478. S490 is modified (phosphoserine).

It belongs to the major facilitator superfamily. Sugar transporter (TC 2.A.1.1) family. Glucose transporter subfamily. In terms of assembly, found in a complex with ADD2, DMTN and SLC2A1. Interacts (via C-terminus cytoplasmic region) with DMTN. Interacts with SNX27; the interaction is required when endocytosed to prevent degradation in lysosomes and promote recycling to the plasma membrane. Interacts with GIPC (via PDZ domain). Interacts with STOM. Interacts with SGTA (via Gln-rich region). Interacts with BSG. Interacts with SMIM43; the interaction may promote SLC2A1-mediated glucose transport to meet the energy needs of mesendoderm differentiation. In terms of processing, phosphorylation at Ser-226 by PKC promotes glucose uptake by increasing cell membrane localization.

The protein localises to the cell membrane. It is found in the photoreceptor inner segment. It catalyses the reaction D-glucose(out) = D-glucose(in). Its activity is regulated as follows. The uptake of glucose is inhibited by cytochalasin B. Glucose uptake is increased in response to phorbol ester 12-O-tetradecanoylphorbol-13-acetate (TPA) treatment: TPA-induced glucose uptake requires phosphorylation at Ser-226. Its function is as follows. Facilitative glucose transporter, which is responsible for constitutive or basal glucose uptake. Has a very broad substrate specificity; can transport a wide range of aldoses including both pentoses and hexoses. Most important energy carrier of the brain: present at the blood-brain barrier and assures the energy-independent, facilitative transport of glucose into the brain. In association with BSG and NXNL1, promotes retinal cone survival by increasing glucose uptake into photoreceptors. Required for mesendoderm differentiation. This is Solute carrier family 2, facilitated glucose transporter member 1 from Sus scrofa (Pig).